We begin with the raw amino-acid sequence, 90 residues long: Small ribosomal subunit protein uS15 (90 aa).

It belongs to the universal ribosomal protein uS15 family. As to quaternary structure, part of the 30S ribosomal subunit. Forms a bridge to the 50S subunit in the 70S ribosome, contacting the 23S rRNA.

Functionally, one of the primary rRNA binding proteins, it binds directly to 16S rRNA where it helps nucleate assembly of the platform of the 30S subunit by binding and bridging several RNA helices of the 16S rRNA. Forms an intersubunit bridge (bridge B4) with the 23S rRNA of the 50S subunit in the ribosome. The sequence is that of Small ribosomal subunit protein uS15 from Helicobacter hepaticus (strain ATCC 51449 / 3B1).